The following is an 834-amino-acid chain: WPP domain-associated protein (834 aa).

Coiled coils occupy residues 410–456, 574–700, and 792–812; these read SFGN…RLQH, SLDT…VLAI, and AEAE…LVEK.

In terms of assembly, interacts with MAF1. As to expression, expressed in seedlings, leaves and fruits.

The protein resides in the golgi apparatus. It is found in the cytoplasm. The protein is WPP domain-associated protein (WAP) of Solanum lycopersicum (Tomato).